A 419-amino-acid chain; its full sequence is Inward rectifier potassium channel 16 (419 aa).

Residues methionine 1–aspartate 67 lie on the Cytoplasmic side of the membrane. The chain crosses the membrane as a helical span at residues threonine 68–leucine 94. Residues isoleucine 95–serine 117 are Extracellular-facing. Residues phenylalanine 118 to tyrosine 134 constitute an intramembrane region (helical; Pore-forming). The Selectivity filter motif lies at threonine 131–tyrosine 136. Over glycine 135–cysteine 143 the chain is Extracellular. Residues serine 144–lysine 171 form a helical membrane-spanning segment. Residues methionine 172–methionine 419 are Cytoplasmic-facing. 3 positions are modified to phosphoserine: serine 358, serine 374, and serine 376.

This sequence belongs to the inward rectifier-type potassium channel (TC 1.A.2.1) family. KCNJ16 subfamily. It forms heteromeric channels with Kir4.1/KCNJ10; this interaction is required for KCNJ16 localization to the basolateral membrane in kidney cells. As a heteromer with KCNJ10, may interact with MAGI1; this interaction may facilitate KCNJ10/KCNJ16 potassium channel expression at the basolateral membrane in kidney cells. May form heteromers with Kir2.1/KCNJ2. Can form heteromeric channels with Kir4.2/KCNJ15. Expressed in the brain, testis, liver, spleen, kidney, submaxillary gland and adrenals. In the kidney, expressed in the epithelial cells of both proximal and distal convoluted tubules, in the endothelial cells surrounding glomerular capillaries and in the flattened parietal layer of Bowman's capsule.

The protein localises to the membrane. It localises to the basolateral cell membrane. The enzyme catalyses K(+)(in) = K(+)(out). With respect to regulation, channel activity is strongly regulated by variations of cytosolic pH; channels are activated by alkaline and inhibited by acidic pH values. Activated by phosphatidylinositol 4,5 biphosphate (PtdIns(4,5)P2). Functionally, inward rectifier potassium channels are characterized by a greater tendency to allow potassium to flow into the cell rather than out of it. Their voltage dependence is regulated by the concentration of extracellular potassium; as external potassium is raised, the voltage range of the channel opening shifts to more positive voltages. The inward rectification is mainly due to the blockage of outward current by internal magnesium. KCNJ16 may be involved in the regulation of fluid and pH balance. In the kidney, together with KCNJ10, mediates basolateral K(+) recycling in distal tubules; this process is critical for Na(+) reabsorption at the tubules. The chain is Inward rectifier potassium channel 16 (Kcnj16) from Rattus norvegicus (Rat).